Here is a 218-residue protein sequence, read N- to C-terminus: 3,4-dihydroxy-2-butanone 4-phosphate synthase (218 aa).

D-ribulose 5-phosphate is bound by residues 38–39, Asp-43, 151–155, and Glu-175; these read RE and RRGHT. Glu-39 is a binding site for Mg(2+). His-154 is a Mg(2+) binding site.

This sequence belongs to the DHBP synthase family. Homodimer. The cofactor is Mg(2+). It depends on Mn(2+) as a cofactor.

The enzyme catalyses D-ribulose 5-phosphate = (2S)-2-hydroxy-3-oxobutyl phosphate + formate + H(+). It participates in cofactor biosynthesis; riboflavin biosynthesis; 2-hydroxy-3-oxobutyl phosphate from D-ribulose 5-phosphate: step 1/1. Its function is as follows. Catalyzes the conversion of D-ribulose 5-phosphate to formate and 3,4-dihydroxy-2-butanone 4-phosphate. The sequence is that of 3,4-dihydroxy-2-butanone 4-phosphate synthase from Vibrio cholerae serotype O1 (strain M66-2).